We begin with the raw amino-acid sequence, 356 residues long: Protein RecA (356 aa).

78 to 85 (GPESSGKT) contacts ATP.

It belongs to the RecA family.

It is found in the cytoplasm. Its function is as follows. Can catalyze the hydrolysis of ATP in the presence of single-stranded DNA, the ATP-dependent uptake of single-stranded DNA by duplex DNA, and the ATP-dependent hybridization of homologous single-stranded DNAs. It interacts with LexA causing its activation and leading to its autocatalytic cleavage. This is Protein RecA from Paracoccus denitrificans.